The chain runs to 715 residues: Fatty acid oxidation complex subunit alpha (715 aa).

Positions 1 to 190 (MIYEGKAITV…KVGAVDAVVA (190 aa)) are enoyl-CoA hydratase/isomerase. Asp297 lines the substrate pocket. The 3-hydroxyacyl-CoA dehydrogenase stretch occupies residues 312-715 (HDVKQAAVLG…MAKNGQRFFN (404 aa)). Residues Met325, Asp344, 401-403 (VVE), Lys408, and Ser430 each bind NAD(+). The For 3-hydroxyacyl-CoA dehydrogenase activity role is filled by His451. Asn454 is a binding site for NAD(+). Residues Asn501 and Tyr660 each contribute to the substrate site.

It in the N-terminal section; belongs to the enoyl-CoA hydratase/isomerase family. The protein in the C-terminal section; belongs to the 3-hydroxyacyl-CoA dehydrogenase family. Heterotetramer of two alpha chains (FadB) and two beta chains (FadA).

It catalyses the reaction a (3S)-3-hydroxyacyl-CoA + NAD(+) = a 3-oxoacyl-CoA + NADH + H(+). The catalysed reaction is a (3S)-3-hydroxyacyl-CoA = a (2E)-enoyl-CoA + H2O. It carries out the reaction a 4-saturated-(3S)-3-hydroxyacyl-CoA = a (3E)-enoyl-CoA + H2O. The enzyme catalyses (3S)-3-hydroxybutanoyl-CoA = (3R)-3-hydroxybutanoyl-CoA. It catalyses the reaction a (3Z)-enoyl-CoA = a 4-saturated (2E)-enoyl-CoA. The catalysed reaction is a (3E)-enoyl-CoA = a 4-saturated (2E)-enoyl-CoA. The protein operates within lipid metabolism; fatty acid beta-oxidation. Involved in the aerobic and anaerobic degradation of long-chain fatty acids via beta-oxidation cycle. Catalyzes the formation of 3-oxoacyl-CoA from enoyl-CoA via L-3-hydroxyacyl-CoA. It can also use D-3-hydroxyacyl-CoA and cis-3-enoyl-CoA as substrate. This Pseudomonas entomophila (strain L48) protein is Fatty acid oxidation complex subunit alpha.